The sequence spans 354 residues: Rhodopsin (354 aa).

Topologically, residues 1 to 36 (MNGTEGPDFYVPMVNTTGIVRSPYDYPQYYLVNPAA) are extracellular. 2 N-linked (GlcNAc...) asparagine glycosylation sites follow: Asn-2 and Asn-15. The chain crosses the membrane as a helical span at residues 37 to 61 (FSMLAAYMFFLILVGFPVNFLTLYV). Over 62–73 (TMEHKKLRTPLN) the chain is Cytoplasmic. Residues 74 to 96 (YILLNLAVANLFMVIGGFTTTMY) form a helical membrane-spanning segment. Residues 97–110 (TSMHGYFVLGRTGC) are Extracellular-facing. Residues Cys-110 and Cys-187 are joined by a disulfide bond. Residues 111–133 (NLEGFFATLGGEIALWSLVVLAV) form a helical membrane-spanning segment. Positions 134–136 (ERW) match the 'Ionic lock' involved in activated form stabilization motif. Over 134 to 152 (ERWVVVCKPISNFRFGENH) the chain is Cytoplasmic. Residues 153–173 (AVMGVSFTWLMACACSVPPLF) form a helical membrane-spanning segment. Residues 174–202 (GWSRYIPEGMQCSCGIDYYTRAPGYNNES) are Extracellular-facing. A helical transmembrane segment spans residues 203–224 (FVIYMFVCHFSIPLTIIFFCYG). Topologically, residues 225–252 (RLLCAVKDAAAAQQESETTQRAEREVSR) are cytoplasmic. A helical membrane pass occupies residues 253-274 (MVVIMVIGFLICWLPYASVAWF). Residues 275–286 (IFTHQGSEFGPV) are Extracellular-facing. The helical transmembrane segment at 287 to 308 (FMTIPAFFAKSSAIYNPMIYIC) threads the bilayer. Residue Lys-296 is modified to N6-(retinylidene)lysine. At 309–354 (MNKQFRHCMITTLCCGKNPFEEEEGASTTASKTEASSVSSSHVSPA) the chain is on the cytoplasmic side. S-palmitoyl cysteine attachment occurs at residues Cys-322 and Cys-323. Positions 333–354 (GASTTASKTEASSVSSSHVSPA) are disordered. Positions 334-354 (ASTTASKTEASSVSSSHVSPA) are enriched in low complexity.

This sequence belongs to the G-protein coupled receptor 1 family. Opsin subfamily. In terms of processing, phosphorylated on some or all of the serine and threonine residues present in the C-terminal region. Post-translationally, contains one covalently linked retinal chromophore.

Its subcellular location is the membrane. The protein localises to the cell projection. The protein resides in the cilium. It is found in the photoreceptor outer segment. Functionally, photoreceptor required for image-forming vision at low light intensity. While most salt water fish species use retinal as chromophore, most freshwater fish use 3-dehydroretinal, or a mixture of retinal and 3-dehydroretinal. Light-induced isomerization of 11-cis to all-trans retinal triggers a conformational change that activates signaling via G-proteins. Subsequent receptor phosphorylation mediates displacement of the bound G-protein alpha subunit by arrestin and terminates signaling. This chain is Rhodopsin (rho), found in Zeus faber (John Dory).